Reading from the N-terminus, the 338-residue chain is Ferredoxin--NADP reductase (338 aa).

Residues threonine 14, aspartate 33, glutamine 41, tyrosine 46, valine 86, phenylalanine 120, aspartate 284, and threonine 325 each coordinate FAD.

It belongs to the ferredoxin--NADP reductase type 2 family. As to quaternary structure, homodimer. FAD serves as cofactor.

It catalyses the reaction 2 reduced [2Fe-2S]-[ferredoxin] + NADP(+) + H(+) = 2 oxidized [2Fe-2S]-[ferredoxin] + NADPH. This chain is Ferredoxin--NADP reductase, found in Pelagibacter ubique (strain HTCC1062).